We begin with the raw amino-acid sequence, 559 residues long: Sesquiterpene synthase TPS3 (559 aa).

(2E,6E)-farnesyl diphosphate contacts are provided by arginine 275, aspartate 312, aspartate 316, arginine 453, and aspartate 456. Residues aspartate 312 and aspartate 316 each contribute to the Mg(2+) site. The short motif at 312 to 316 (DDTYD) is the DDXXD motif element. Residues aspartate 456, threonine 460, and glutamate 464 each coordinate Mg(2+).

The protein belongs to the terpene synthase family. Tpsa subfamily. As to quaternary structure, monomer. Requires Mg(2+) as cofactor. Highly expressed in glandular trichomes. Expressed in roots and leaves.

It is found in the cytoplasm. It carries out the reaction (2E,6E)-farnesyl diphosphate = (+)-(R)-germacrene A + diphosphate. Its pathway is secondary metabolite biosynthesis; terpenoid biosynthesis. Its function is as follows. Sesquiterpene synthase involved in the biosynthesis of volatile compounds. Mediates the conversion of (2E,6E)-farnesyl diphosphate (FPP) into (+)-(R)-germacrene A. This Xanthium strumarium (Rough cocklebur) protein is Sesquiterpene synthase TPS3.